Reading from the N-terminus, the 651-residue chain is tRNA uridine 5-carboxymethylaminomethyl modification enzyme MnmG (651 aa).

11–16 serves as a coordination point for FAD; that stretch reads GAGHAG. 296–310 lines the NAD(+) pocket; sequence GPRYCPSIEDKIVRF.

It belongs to the MnmG family. Homodimer. Heterotetramer of two MnmE and two MnmG subunits. FAD is required as a cofactor.

Its subcellular location is the cytoplasm. Functionally, NAD-binding protein involved in the addition of a carboxymethylaminomethyl (cmnm) group at the wobble position (U34) of certain tRNAs, forming tRNA-cmnm(5)s(2)U34. The chain is tRNA uridine 5-carboxymethylaminomethyl modification enzyme MnmG from Chloroflexus aurantiacus (strain ATCC 29366 / DSM 635 / J-10-fl).